Here is a 314-residue protein sequence, read N- to C-terminus: 4-hydroxy-3-methylbut-2-enyl diphosphate reductase (314 aa).

Cys12 is a [4Fe-4S] cluster binding site. (2E)-4-hydroxy-3-methylbut-2-enyl diphosphate-binding residues include His41 and His74. Residues His41 and His74 each contribute to the dimethylallyl diphosphate site. Isopentenyl diphosphate-binding residues include His41 and His74. A [4Fe-4S] cluster-binding site is contributed by Cys96. His124 contacts (2E)-4-hydroxy-3-methylbut-2-enyl diphosphate. His124 provides a ligand contact to dimethylallyl diphosphate. His124 serves as a coordination point for isopentenyl diphosphate. The active-site Proton donor is Glu126. Thr168 is a (2E)-4-hydroxy-3-methylbut-2-enyl diphosphate binding site. Cys198 is a binding site for [4Fe-4S] cluster. (2E)-4-hydroxy-3-methylbut-2-enyl diphosphate-binding residues include Ser226, Ser227, Asn228, and Ser270. Residues Ser226, Ser227, Asn228, and Ser270 each coordinate dimethylallyl diphosphate. Residues Ser226, Ser227, Asn228, and Ser270 each contribute to the isopentenyl diphosphate site.

Belongs to the IspH family. Requires [4Fe-4S] cluster as cofactor.

The enzyme catalyses isopentenyl diphosphate + 2 oxidized [2Fe-2S]-[ferredoxin] + H2O = (2E)-4-hydroxy-3-methylbut-2-enyl diphosphate + 2 reduced [2Fe-2S]-[ferredoxin] + 2 H(+). It carries out the reaction dimethylallyl diphosphate + 2 oxidized [2Fe-2S]-[ferredoxin] + H2O = (2E)-4-hydroxy-3-methylbut-2-enyl diphosphate + 2 reduced [2Fe-2S]-[ferredoxin] + 2 H(+). It participates in isoprenoid biosynthesis; dimethylallyl diphosphate biosynthesis; dimethylallyl diphosphate from (2E)-4-hydroxy-3-methylbutenyl diphosphate: step 1/1. The protein operates within isoprenoid biosynthesis; isopentenyl diphosphate biosynthesis via DXP pathway; isopentenyl diphosphate from 1-deoxy-D-xylulose 5-phosphate: step 6/6. Its function is as follows. Catalyzes the conversion of 1-hydroxy-2-methyl-2-(E)-butenyl 4-diphosphate (HMBPP) into a mixture of isopentenyl diphosphate (IPP) and dimethylallyl diphosphate (DMAPP). Acts in the terminal step of the DOXP/MEP pathway for isoprenoid precursor biosynthesis. The protein is 4-hydroxy-3-methylbut-2-enyl diphosphate reductase of Pseudomonas fluorescens (strain Pf0-1).